Consider the following 435-residue polypeptide: MESQWRGAAATAFHQHWLARLLLWVSTLSCSFSLPASLPPSLVPRVRSSYTMGKTFLGLDKCNACIGTSICKKFFKEEIRFDNSLASHLGLPPQDLHSYAANYSDDSKTWRPVEISQLVSRYQIEISDRRICASVSAPKTCSIERILQKTGRFQKWLQAKRLTPDLVQGLPSPFLRCPSQRLLDRVVRRYAEVVDAGSIFMDHFTAGDKLRLLYTLAVNAHPIILQIFPGAEGWPMPRYLGSCGRFLVSTSTRPLQEFYDASPEQAADLAYQLLRVLESLRSNDLNYFFYFTHVDAGMFGIFDNGHLFIRDASALGIIDKQEGSQAAARTGENEDIFSCLVSDCQIQLSSCDTVPEKQSLVLVCQQLLPQLLQGKFPSPVQKEIDSALSLCSKDNSTDLEVLGATSWLKDILRSLRTCDPRFAYRYPDCKYNDRF.

Positions 1–33 are cleaved as a signal peptide; the sequence is MESQWRGAAATAFHQHWLARLLLWVSTLSCSFS. N-linked (GlcNAc...) asparagine glycosylation is found at Asn-102 and Asn-395.

The protein belongs to the DIPK family.

The protein localises to the secreted. This chain is Divergent protein kinase domain 2B (Dipk2b), found in Mus musculus (Mouse).